A 420-amino-acid polypeptide reads, in one-letter code: D-tagatose-1,6-bisphosphate aldolase subunit GatZ (420 aa).

It belongs to the GatZ/KbaZ family. GatZ subfamily. As to quaternary structure, forms a complex with GatY.

Its pathway is carbohydrate metabolism; D-tagatose 6-phosphate degradation; D-glyceraldehyde 3-phosphate and glycerone phosphate from D-tagatose 6-phosphate: step 2/2. Component of the tagatose-1,6-bisphosphate aldolase GatYZ that is required for full activity and stability of the Y subunit. Could have a chaperone-like function for the proper and stable folding of GatY. When expressed alone, GatZ does not show any aldolase activity. Is involved in the catabolism of galactitol. This is D-tagatose-1,6-bisphosphate aldolase subunit GatZ from Shigella flexneri serotype 5b (strain 8401).